A 173-amino-acid polypeptide reads, in one-letter code: Protein tyrosine phosphatase type IVA 1 (173 aa).

The 154-residue stretch at 8-161 folds into the Tyrosine-protein phosphatase domain; it reads APVEVTYKNM…YRPKMRLRFK (154 aa). A disulfide bond links Cys49 and Cys104. The active-site Proton donor is Asp72. Residues 97–132 form an interaction with ATF5 region; it reads GCCIAVHCVAGLGRAPVLVALALIEGGMKYEDAVQF. The Phosphocysteine intermediate role is filled by Cys104. 105–110 serves as a coordination point for phosphate; it reads VAGLGR. Residue Arg110 coordinates substrate. Residue Cys170 is modified to Cysteine methyl ester. The S-farnesyl cysteine moiety is linked to residue Cys170. A propeptide spans 171–173 (removed in mature form); sequence CIQ.

The protein belongs to the protein-tyrosine phosphatase family. Homotrimer. Interacts with ATF5. Interacts with tubulin. In terms of processing, farnesylated. Farnesylation is required for membrane targeting. Unfarnesylated forms are shifted into the nucleus. In terms of tissue distribution, expressed in bone marrow, lymph nodes, T lymphocytes, spleen, thymus and tonsil. Overexpressed in tumor cell lines.

The protein resides in the cell membrane. Its subcellular location is the early endosome. It localises to the endoplasmic reticulum. The protein localises to the cytoplasm. It is found in the cytoskeleton. The protein resides in the spindle. Its subcellular location is the nucleus. It catalyses the reaction O-phospho-L-tyrosyl-[protein] + H2O = L-tyrosyl-[protein] + phosphate. With respect to regulation, inhibited by sodium orthovanadate and pentamidine. Its function is as follows. Protein tyrosine phosphatase which stimulates progression from G1 into S phase during mitosis. May play a role in the development and maintenance of differentiating epithelial tissues. Enhances cell proliferation, cell motility and invasive activity, and promotes cancer metastasis. The protein is Protein tyrosine phosphatase type IVA 1 (PTP4A1) of Homo sapiens (Human).